The primary structure comprises 353 residues: Photosystem II protein D1 (353 aa).

T2 carries the N-acetylthreonine modification. T2 is subject to Phosphothreonine. The next 3 membrane-spanning stretches (helical) occupy residues 29-46 (YIGW…TATS), 118-133 (HFLL…EWEL), and 142-156 (WIAI…AATA). H118 contributes to the chlorophyll a binding site. Y126 serves as a coordination point for pheophytin a. Positions 170 and 189 each coordinate [CaMn4O5] cluster. A helical transmembrane segment spans residues 197–218 (FHMLGVAGVFGGSLFSAMHGSL). H198 serves as a coordination point for chlorophyll a. A quinone contacts are provided by residues H215 and 264–265 (SF). Position 215 (H215) interacts with Fe cation. A Fe cation-binding site is contributed by H272. Residues 274–288 (FLAAWPVIGIWFTAL) traverse the membrane as a helical segment. [CaMn4O5] cluster-binding residues include H332, E333, D342, and A344. Residues 345 to 353 (TFEVSATNA) constitute a propeptide that is removed on maturation.

It belongs to the reaction center PufL/M/PsbA/D family. As to quaternary structure, PSII is composed of 1 copy each of membrane proteins PsbA, PsbB, PsbC, PsbD, PsbE, PsbF, PsbH, PsbI, PsbJ, PsbK, PsbL, PsbM, PsbT, PsbX, PsbY, PsbZ, Psb30/Ycf12, at least 3 peripheral proteins of the oxygen-evolving complex and a large number of cofactors. It forms dimeric complexes. The D1/D2 heterodimer binds P680, chlorophylls that are the primary electron donor of PSII, and subsequent electron acceptors. It shares a non-heme iron and each subunit binds pheophytin, quinone, additional chlorophylls, carotenoids and lipids. D1 provides most of the ligands for the Mn4-Ca-O5 cluster of the oxygen-evolving complex (OEC). There is also a Cl(-1) ion associated with D1 and D2, which is required for oxygen evolution. The PSII complex binds additional chlorophylls, carotenoids and specific lipids. is required as a cofactor. In terms of processing, tyr-161 forms a radical intermediate that is referred to as redox-active TyrZ, YZ or Y-Z. C-terminally processed by CTPA; processing is essential to allow assembly of the oxygen-evolving complex and thus photosynthetic growth.

The protein localises to the plastid membrane. The catalysed reaction is 2 a plastoquinone + 4 hnu + 2 H2O = 2 a plastoquinol + O2. Its function is as follows. Photosystem II (PSII) is a light-driven water:plastoquinone oxidoreductase that uses light energy to abstract electrons from H(2)O, generating O(2) and a proton gradient subsequently used for ATP formation. It consists of a core antenna complex that captures photons, and an electron transfer chain that converts photonic excitation into a charge separation. The D1/D2 (PsbA/PsbD) reaction center heterodimer binds P680, the primary electron donor of PSII as well as several subsequent electron acceptors. The chain is Photosystem II protein D1 from Cuscuta gronovii (Common dodder).